A 281-amino-acid chain; its full sequence is sn-glycerol-3-phosphate transport system permease protein UgpE (281 aa).

The next 6 helical transmembrane spans lie at 16–36 (LILGIAVILFPLYVAFVAATL), 85–105 (FSITLGKITVSMLSAFAIVWF), 113–133 (FFWMIFITLMLPVEVRIFPTV), 142–162 (LDSYAGLTLPLMASAIATFLF), 202–222 (ALFVITFIYGWNQYLWPLLII), and 247–267 (WNSVMAAMLLTLIPPVVIVLV). The 192-residue stretch at 77–268 (LLNSFVMAFS…IPPVVIVLVM (192 aa)) folds into the ABC transmembrane type-1 domain.

It belongs to the binding-protein-dependent transport system permease family. UgpAE subfamily. As to quaternary structure, the complex is composed of two ATP-binding proteins (UgpC), two transmembrane proteins (UgpA and UgpE) and a solute-binding protein (UgpB).

It is found in the cell inner membrane. Its function is as follows. Part of the ABC transporter complex UgpBAEC involved in sn-glycerol-3-phosphate (G3P) import. Probably responsible for the translocation of the substrate across the membrane. The chain is sn-glycerol-3-phosphate transport system permease protein UgpE (ugpE) from Shigella flexneri serotype 5b (strain 8401).